A 293-amino-acid chain; its full sequence is Formamidopyrimidine-DNA glycosylase (293 aa).

P2 (schiff-base intermediate with DNA) is an active-site residue. The active-site Proton donor is E3. The Proton donor; for beta-elimination activity role is filled by K58. The DNA site is built by H104, R127, and R170. The FPG-type zinc finger occupies 257–293 (SVYGREGKPCRNPACGGTVERVVQSGRSTFFCASCQT). Residue R283 is the Proton donor; for delta-elimination activity of the active site.

The protein belongs to the FPG family. Monomer. Zn(2+) is required as a cofactor.

The enzyme catalyses Hydrolysis of DNA containing ring-opened 7-methylguanine residues, releasing 2,6-diamino-4-hydroxy-5-(N-methyl)formamidopyrimidine.. It catalyses the reaction 2'-deoxyribonucleotide-(2'-deoxyribose 5'-phosphate)-2'-deoxyribonucleotide-DNA = a 3'-end 2'-deoxyribonucleotide-(2,3-dehydro-2,3-deoxyribose 5'-phosphate)-DNA + a 5'-end 5'-phospho-2'-deoxyribonucleoside-DNA + H(+). Functionally, involved in base excision repair of DNA damaged by oxidation or by mutagenic agents. Acts as a DNA glycosylase that recognizes and removes damaged bases. Has a preference for oxidized purines, such as 7,8-dihydro-8-oxoguanine (8-oxoG). Has AP (apurinic/apyrimidinic) lyase activity and introduces nicks in the DNA strand. Cleaves the DNA backbone by beta-delta elimination to generate a single-strand break at the site of the removed base with both 3'- and 5'-phosphates. This is Formamidopyrimidine-DNA glycosylase from Brucella ovis (strain ATCC 25840 / 63/290 / NCTC 10512).